Consider the following 513-residue polypeptide: ATP synthase subunit alpha (513 aa).

169–176 (GDRQTGKT) is a binding site for ATP.

This sequence belongs to the ATPase alpha/beta chains family. F-type ATPases have 2 components, CF(1) - the catalytic core - and CF(0) - the membrane proton channel. CF(1) has five subunits: alpha(3), beta(3), gamma(1), delta(1), epsilon(1). CF(0) has three main subunits: a(1), b(2) and c(9-12). The alpha and beta chains form an alternating ring which encloses part of the gamma chain. CF(1) is attached to CF(0) by a central stalk formed by the gamma and epsilon chains, while a peripheral stalk is formed by the delta and b chains.

The protein resides in the cell inner membrane. It carries out the reaction ATP + H2O + 4 H(+)(in) = ADP + phosphate + 5 H(+)(out). Produces ATP from ADP in the presence of a proton gradient across the membrane. The alpha chain is a regulatory subunit. This chain is ATP synthase subunit alpha, found in Haemophilus influenzae (strain PittGG).